Here is a 211-residue protein sequence, read N- to C-terminus: Pyridoxine/pyridoxamine 5'-phosphate oxidase (211 aa).

Substrate-binding positions include 7–10 and Lys65; that span reads RREY. FMN is bound by residues 60-65, 75-76, Lys82, and Gln104; these read RIVLLK and FT. 3 residues coordinate substrate: Tyr122, Arg126, and Ser130. FMN is bound by residues 139–140 and Trp184; that span reads QS. Residue 190–192 participates in substrate binding; the sequence is RLH. Arg194 serves as a coordination point for FMN.

This sequence belongs to the pyridoxamine 5'-phosphate oxidase family. In terms of assembly, homodimer. Requires FMN as cofactor.

It catalyses the reaction pyridoxamine 5'-phosphate + O2 + H2O = pyridoxal 5'-phosphate + H2O2 + NH4(+). The catalysed reaction is pyridoxine 5'-phosphate + O2 = pyridoxal 5'-phosphate + H2O2. It functions in the pathway cofactor metabolism; pyridoxal 5'-phosphate salvage; pyridoxal 5'-phosphate from pyridoxamine 5'-phosphate: step 1/1. It participates in cofactor metabolism; pyridoxal 5'-phosphate salvage; pyridoxal 5'-phosphate from pyridoxine 5'-phosphate: step 1/1. In terms of biological role, catalyzes the oxidation of either pyridoxine 5'-phosphate (PNP) or pyridoxamine 5'-phosphate (PMP) into pyridoxal 5'-phosphate (PLP). This is Pyridoxine/pyridoxamine 5'-phosphate oxidase from Teredinibacter turnerae (strain ATCC 39867 / T7901).